The primary structure comprises 542 residues: MAKDIKFSADARSSMVRGVDILADTVKVTLGPKGRNVVLEKSFGSPLITNDGVTIAKEIELEDHFENMGAKLVSEVASKTNDIAGDGTTTATVLTQAIVREGLKNVTAGANPIGIRRGIETAVATAVDELKAIAQPVSGKEAIAQVAAVSSRSEKVGEYVSEAMEKVGNDGVITIEESRGMETELDVVEGMQFDRGYLSQYMVTDNEKMVADLENPYLLITDKKISNIQDVLPLLEEVLKTNRPLLIIADDVDGEALPTLVLNKIRGTFNVVAVKAPGFGDRRKAMLEDIAVLTGGTVITEDLGLELKDTTIDALGQAARVTVDKDSTVIVEGSGGKEAVANRVNLIKSQIETATSDFDREKLQERLAKLSGGVAVIKVGAATETELKEMKLRIEDALNATRAAVEEGIVAGGGTALINVIEKVAALDLTDDAATGRNLVLRALEEPVRQIAKNAGYEGSVIIDKLKNSSAGTGFNAANGEWVDMIDAGIIDPVKVTRSALQNAASVASLILTTEAVVADHPAPEAPAAAPAMDPSMMGGMM.

ATP is bound by residues 29–32 (TLGP), 86–90 (DGTTT), glycine 413, 476–478 (NAA), and aspartate 492.

This sequence belongs to the chaperonin (HSP60) family. In terms of assembly, forms a cylinder of 14 subunits composed of two heptameric rings stacked back-to-back. Interacts with the co-chaperonin GroES.

It is found in the cytoplasm. The enzyme catalyses ATP + H2O + a folded polypeptide = ADP + phosphate + an unfolded polypeptide.. In terms of biological role, together with its co-chaperonin GroES, plays an essential role in assisting protein folding. The GroEL-GroES system forms a nano-cage that allows encapsulation of the non-native substrate proteins and provides a physical environment optimized to promote and accelerate protein folding. The protein is Chaperonin GroEL of Streptococcus mutans serotype c (strain ATCC 700610 / UA159).